A 406-amino-acid chain; its full sequence is Trk system potassium uptake protein trkA homolog 1 (406 aa).

Residues 1–124 (MKAVIIGAGE…RAQVGVDLMI (124 aa)) enclose the RCK N-terminal 1 domain. NAD(+) contacts are provided by residues 7–11 (GAGEV), Asp-29, 70–71 (TG), and Arg-101. Residues 144-225 (IDAEMFAEGK…MEDLESVFGS (82 aa)) form the RCK C-terminal domain. Residues 230–348 (RTRILLIGCG…FEMVGIDMAV (119 aa)) enclose the RCK N-terminal 2 domain. Residue 232 to 262 (RILLIGCGIVGMYLAKLIDKEENADLRIIEH) participates in NAD(+) binding.

In terms of biological role, part of a potassium transport system. This chain is Trk system potassium uptake protein trkA homolog 1 (trkA1), found in Methanosarcina mazei (Methanosarcina frisia).